A 476-amino-acid chain; its full sequence is Ubiquinone biosynthesis monooxygenase COQ6, mitochondrial (476 aa).

The N-terminal 35 residues, 1 to 35 (MAARIGSMAGLLCVRWWSSAQLAARGGPLVASQRW), are a transit peptide targeting the mitochondrion. N6-succinyllysine is present on Lys219.

The protein belongs to the UbiH/COQ6 family. Component of a multi-subunit COQ enzyme complex, composed of at least COQ3, COQ4, COQ5, COQ6, COQ7 and COQ9. Interacts with COQ8B and COQ7. FAD is required as a cofactor. Expressed in the kidney, in podocytes.

It is found in the mitochondrion inner membrane. The protein localises to the golgi apparatus. The protein resides in the cell projection. It carries out the reaction 4-hydroxy-3-(all-trans-decaprenyl)benzoate + 2 reduced [2Fe-2S]-[ferredoxin] + O2 + 2 H(+) = 3,4-dihydroxy-5-(all-trans-decaprenyl)benzoate + 2 oxidized [2Fe-2S]-[ferredoxin] + H2O. The enzyme catalyses 2-methoxy-6-(all-trans-decaprenyl)phenol + 2 reduced [2Fe-2S]-[ferredoxin] + O2 + 2 H(+) = 2-methoxy-6-(all-trans-decaprenyl)benzene-1,4-diol + 2 oxidized [2Fe-2S]-[ferredoxin] + H2O. It participates in cofactor biosynthesis; ubiquinone biosynthesis. In terms of biological role, FAD-dependent monooxygenase required for two non-consecutive steps during ubiquinone biosynthesis. Required for the C5-ring hydroxylation during ubiquinone biosynthesis by catalyzing the hydroxylation of 4-hydroxy-3-(all-trans-decaprenyl)benzoic acid to 3,4-dihydroxy-5-(all-trans-decaprenyl)benzoic acid. Also acts downstream of COQ4, for the C1-hydroxylation during ubiquinone biosynthesis by catalyzing the hydroxylation of 2-methoxy-6-(all-trans-decaprenyl)phenol to 2-methoxy-6-(all-trans-decaprenyl)benzene-1,4-diol. The electrons required for the hydroxylation reaction are funneled indirectly to COQ6 from NADPH via a ferredoxin/ferredoxin reductase system composed of FDX2 and FDXR. This Mus musculus (Mouse) protein is Ubiquinone biosynthesis monooxygenase COQ6, mitochondrial.